Here is a 304-residue protein sequence, read N- to C-terminus: Glycine--tRNA ligase alpha subunit (304 aa).

The protein belongs to the class-II aminoacyl-tRNA synthetase family. In terms of assembly, tetramer of two alpha and two beta subunits.

The protein localises to the cytoplasm. It carries out the reaction tRNA(Gly) + glycine + ATP = glycyl-tRNA(Gly) + AMP + diphosphate. The protein is Glycine--tRNA ligase alpha subunit of Afipia carboxidovorans (strain ATCC 49405 / DSM 1227 / KCTC 32145 / OM5) (Oligotropha carboxidovorans).